The chain runs to 232 residues: Protein DOG1-like 4 (232 aa).

One can recognise a DOG1 domain in the interval 9–229 (EEKFLEFYES…RRWGNRRHYV (221 aa)).

The chain is Protein DOG1-like 4 from Arabidopsis thaliana (Mouse-ear cress).